We begin with the raw amino-acid sequence, 398 residues long: Chalcone synthase 1 (398 aa).

58-65 (KFKRMCDK) is a CoA binding site. Catalysis depends on C167, which acts as the Acyl-thioester intermediate. Residues T200 and 219 to 220 (GD) each bind substrate. A311 contributes to the CoA binding site.

The protein belongs to the thiolase-like superfamily. Chalcone/stilbene synthases family. In terms of assembly, homodimer.

The catalysed reaction is (E)-4-coumaroyl-CoA + 3 malonyl-CoA + 3 H(+) = 2',4,4',6'-tetrahydroxychalcone + 3 CO2 + 4 CoA. It functions in the pathway secondary metabolite biosynthesis; flavonoid biosynthesis. In terms of biological role, the primary product of this enzyme is 4,2',4',6'-tetrahydroxychalcone (also termed naringenin-chalcone or chalcone) which can under specific conditions spontaneously isomerize into naringenin. The polypeptide is Chalcone synthase 1 (CHS1) (Oryza sativa subsp. japonica (Rice)).